The chain runs to 303 residues: Mesenteric estrogen-dependent adipogenesis protein (303 aa).

It is found in the cytoplasm. Functionally, involved in processes that promote adipocyte differentiation, lipid accumulation, and glucose uptake in mature adipocytes. In Bos taurus (Bovine), this protein is Mesenteric estrogen-dependent adipogenesis protein (MEDAG).